Reading from the N-terminus, the 29-residue chain is uncharacterized protein (29 aa).

Residues 8 to 28 (FALIVVLFILLIIVGTAFVGG) traverse the membrane as a helical segment.

Belongs to the SscA family.

The protein resides in the membrane. This is an uncharacterized protein from Bacillus subtilis (strain 168).